A 243-amino-acid chain; its full sequence is Ubiquinone/menaquinone biosynthesis C-methyltransferase UbiE (243 aa).

Residues threonine 69, aspartate 90, and 116-117 each bind S-adenosyl-L-methionine; that span reads DA.

The protein belongs to the class I-like SAM-binding methyltransferase superfamily. MenG/UbiE family.

It carries out the reaction a 2-demethylmenaquinol + S-adenosyl-L-methionine = a menaquinol + S-adenosyl-L-homocysteine + H(+). It catalyses the reaction a 2-methoxy-6-(all-trans-polyprenyl)benzene-1,4-diol + S-adenosyl-L-methionine = a 5-methoxy-2-methyl-3-(all-trans-polyprenyl)benzene-1,4-diol + S-adenosyl-L-homocysteine + H(+). The protein operates within quinol/quinone metabolism; menaquinone biosynthesis; menaquinol from 1,4-dihydroxy-2-naphthoate: step 2/2. It participates in cofactor biosynthesis; ubiquinone biosynthesis. Methyltransferase required for the conversion of demethylmenaquinol (DMKH2) to menaquinol (MKH2) and the conversion of 2-polyprenyl-6-methoxy-1,4-benzoquinol (DDMQH2) to 2-polyprenyl-3-methyl-6-methoxy-1,4-benzoquinol (DMQH2). This Burkholderia mallei (strain NCTC 10247) protein is Ubiquinone/menaquinone biosynthesis C-methyltransferase UbiE.